The primary structure comprises 300 residues: Serine/arginine-rich splicing factor SR34A (300 aa).

The RRM 1 domain maps to 7-82; sequence RSIYVGNLPG…CRLRVELAHG (76 aa). Disordered stretches follow at residues 81-110 and 198-300; these read HGGRGQSSSDRRGGYGGGGSGYGGGGGGGG and YESS…EGSV. Residues 94–110 show a composition bias toward gly residues; the sequence is GYGGGGSGYGGGGGGGG. An RRM 2 domain is found at 122–200; sequence FRVIVRGLPS…GFIRVKKYES (79 aa). Residues 203 to 239 are compositionally biased toward basic residues; it reads SRSRSPSRSRSRSRSRSRSRGRGRSHSRSRSLSRSKS. Phosphoserine is present on residues Ser207, Ser209, Ser231, Ser233, Ser239, Ser259, Ser275, and Ser285. Residues 253–262 show a composition bias toward low complexity; sequence SRSISKSRSP. Over residues 275–287 the composition is skewed to basic residues; that stretch reads SRSKSRSRSRSRS.

It belongs to the splicing factor SR family. SR subfamily. In terms of assembly, component of the spliceosome.

It localises to the nucleus speckle. Its subcellular location is the nucleus. The protein localises to the nucleoplasm. Functionally, probably involved in intron recognition and spliceosome assembly. In Arabidopsis thaliana (Mouse-ear cress), this protein is Serine/arginine-rich splicing factor SR34A (SR34A).